Reading from the N-terminus, the 120-residue chain is MFAIVRTGGKQYRVAAGDKIVVEKLPGEAGSTVSLGDVLLAGEGAELKDVKGLTVSAEIIAQAKGEKVIVFKKRRRHNYRRRNGHRQQHTILKILSIGGEAKAKKAPAKAKADAPAAAEA.

This sequence belongs to the bacterial ribosomal protein bL21 family. Part of the 50S ribosomal subunit. Contacts protein L20.

In terms of biological role, this protein binds to 23S rRNA in the presence of protein L20. This is Large ribosomal subunit protein bL21 from Rhizorhabdus wittichii (strain DSM 6014 / CCUG 31198 / JCM 15750 / NBRC 105917 / EY 4224 / RW1) (Sphingomonas wittichii).